A 450-amino-acid polypeptide reads, in one-letter code: UDP-N-acetylmuramoylalanine--D-glutamate ligase (450 aa).

Position 119 to 125 (119 to 125) interacts with ATP; that stretch reads GSNGKTT.

Belongs to the MurCDEF family.

The protein localises to the cytoplasm. It catalyses the reaction UDP-N-acetyl-alpha-D-muramoyl-L-alanine + D-glutamate + ATP = UDP-N-acetyl-alpha-D-muramoyl-L-alanyl-D-glutamate + ADP + phosphate + H(+). It participates in cell wall biogenesis; peptidoglycan biosynthesis. In terms of biological role, cell wall formation. Catalyzes the addition of glutamate to the nucleotide precursor UDP-N-acetylmuramoyl-L-alanine (UMA). In Streptococcus pneumoniae serotype 4 (strain ATCC BAA-334 / TIGR4), this protein is UDP-N-acetylmuramoylalanine--D-glutamate ligase.